The following is a 219-amino-acid chain: Probable transaldolase (219 aa).

The active-site Schiff-base intermediate with substrate is lysine 83.

This sequence belongs to the transaldolase family. Type 3B subfamily.

The protein localises to the cytoplasm. It carries out the reaction D-sedoheptulose 7-phosphate + D-glyceraldehyde 3-phosphate = D-erythrose 4-phosphate + beta-D-fructose 6-phosphate. The protein operates within carbohydrate degradation; pentose phosphate pathway; D-glyceraldehyde 3-phosphate and beta-D-fructose 6-phosphate from D-ribose 5-phosphate and D-xylulose 5-phosphate (non-oxidative stage): step 2/3. In terms of biological role, transaldolase is important for the balance of metabolites in the pentose-phosphate pathway. In Cereibacter sphaeroides (strain ATCC 17029 / ATH 2.4.9) (Rhodobacter sphaeroides), this protein is Probable transaldolase.